Here is a 286-residue protein sequence, read N- to C-terminus: E3 ubiquitin-protein ligase SINA-like 7 (286 aa).

The segment at 51-87 (CPICYEAFTIPIFQCDNGHLACSSCCPKLNNKCPACT) adopts an RING-type zinc-finger fold. Residues 101–285 (VLESILIPCP…MRISVKKLNK (185 aa)) form an SBD region. An SIAH-type zinc finger spans residues 104 to 162 (SILIPCPNAKLGCKKNVSYGKELTHEKECMFSHCACPALDCNYTSSYKDLYTHYRITHM). C109, C116, H128, C132, C139, C144, H156, and H161 together coordinate Zn(2+).

It belongs to the SINA (Seven in absentia) family.

The enzyme catalyses S-ubiquitinyl-[E2 ubiquitin-conjugating enzyme]-L-cysteine + [acceptor protein]-L-lysine = [E2 ubiquitin-conjugating enzyme]-L-cysteine + N(6)-ubiquitinyl-[acceptor protein]-L-lysine.. It functions in the pathway protein modification; protein ubiquitination. Its function is as follows. E3 ubiquitin-protein ligase that mediates ubiquitination and subsequent proteasomal degradation of target proteins. E3 ubiquitin ligases accept ubiquitin from an E2 ubiquitin-conjugating enzyme in the form of a thioester and then directly transfers the ubiquitin to targeted substrates. It probably triggers the ubiquitin-mediated degradation of different substrates. The polypeptide is E3 ubiquitin-protein ligase SINA-like 7 (Arabidopsis thaliana (Mouse-ear cress)).